Here is a 493-residue protein sequence, read N- to C-terminus: Dynein regulatory complex subunit 2 (493 aa).

2 coiled-coil regions span residues 99–163 (DSVI…RKLI) and 253–280 (KDEK…ILKG).

Belongs to the DRC2 family. Component of the nexin-dynein regulatory complex (N-DRC). Interacts with DRC1.

It is found in the cytoplasm. The protein resides in the cytoskeleton. Its subcellular location is the flagellum basal body. The protein localises to the cell projection. It localises to the cilium. It is found in the flagellum. The protein resides in the flagellum axoneme. Component of the nexin-dynein regulatory complex (N-DRC), a key regulator of ciliary/flagellar motility which maintains the alignment and integrity of the distal axoneme and regulates microtubule sliding in motile axonemes. Plays a critical role in the assembly of N-DRC and also stabilizes the assembly of multiple inner dynein arms and radial spokes. Coassembles with DRC1 to form a central scaffold needed for assembly of the N-DRC and its attachment to the outer doublet microtubules. In Mus musculus (Mouse), this protein is Dynein regulatory complex subunit 2 (Ccdc65).